Here is a 347-residue protein sequence, read N- to C-terminus: Eukaryotic translation initiation factor 3 subunit I (347 aa).

WD repeat units lie at residues 8–49 (GHER…GTYE), 50–89 (GHNG…CLFT), 146–186 (TFSG…PESG), 198–237 (AHTD…VIKT), 239–278 (ATET…GRFE), and 295–336 (GHFG…SKLY).

The protein belongs to the eIF-3 subunit I family. As to quaternary structure, component of the eukaryotic translation initiation factor 3 (eIF-3) complex.

The protein resides in the cytoplasm. Its function is as follows. Component of the eukaryotic translation initiation factor 3 (eIF-3) complex, which is involved in protein synthesis of a specialized repertoire of mRNAs and, together with other initiation factors, stimulates binding of mRNA and methionyl-tRNAi to the 40S ribosome. The eIF-3 complex specifically targets and initiates translation of a subset of mRNAs involved in cell proliferation. The protein is Eukaryotic translation initiation factor 3 subunit I of Mycosarcoma maydis (Corn smut fungus).